We begin with the raw amino-acid sequence, 747 residues long: Myotubularin-related protein 12 (747 aa).

Gly residues predominate over residues 1–14 (MLGKGVVGGGGGTK). The segment at 1 to 21 (MLGKGVVGGGGGTKGPKPSFV) is disordered. One can recognise a Myotubularin phosphatase domain in the interval 205–643 (FDTLKDWCWE…PEIKVWAQRY (439 aa)). The segment at 449-558 (VPVFLLFLDC…KGQRKGMRFK (110 aa)) is interaction with MTM1. Phosphoserine is present on residues Ser-564, Ser-601, and Ser-716.

The protein belongs to the protein-tyrosine phosphatase family. Non-receptor class myotubularin subfamily. Heterodimer with lipid phosphatase MTM1. Heterodimer with lipid phosphatase MTMR2.

Its subcellular location is the cytoplasm. The protein resides in the sarcoplasmic reticulum. It localises to the myofibril. It is found in the sarcomere. In terms of biological role, acts as an adapter for the myotubularin-related phosphatases. Regulates phosphatase MTM1 protein stability and possibly its intracellular location. By stabilizing MTM1 protein levels, required for skeletal muscle maintenance but not for myogenesis. The sequence is that of Myotubularin-related protein 12 (MTMR12) from Pongo abelii (Sumatran orangutan).